The following is a 102-amino-acid chain: Urease subunit beta (102 aa).

The protein belongs to the urease beta subunit family. In terms of assembly, heterotrimer of UreA (gamma), UreB (beta) and UreC (alpha) subunits. Three heterotrimers associate to form the active enzyme.

It is found in the cytoplasm. It carries out the reaction urea + 2 H2O + H(+) = hydrogencarbonate + 2 NH4(+). It participates in nitrogen metabolism; urea degradation; CO(2) and NH(3) from urea (urease route): step 1/1. This Acinetobacter baumannii (strain ACICU) protein is Urease subunit beta.